Reading from the N-terminus, the 212-residue chain is Thymidylate kinase (212 aa).

10–17 (GLEGAGKT) contributes to the ATP binding site.

Belongs to the thymidylate kinase family.

It carries out the reaction dTMP + ATP = dTDP + ADP. Functionally, phosphorylation of dTMP to form dTDP in both de novo and salvage pathways of dTTP synthesis. The polypeptide is Thymidylate kinase (Yersinia pestis bv. Antiqua (strain Antiqua)).